Consider the following 423-residue polypeptide: Polyglutamylase complex subunit TTLL1 (423 aa).

The 367-residue stretch at Met1–Asn367 folds into the TTL domain. ATP-binding positions include Lys138, Gln144–Gly145, Ser181–Ile184, and Lys194–Asp196. Gln144 is an a protein binding site. Arg220 contacts L-glutamate. Position 241-242 (Thr241–Asn242) interacts with ATP. Lys259 provides a ligand contact to L-glutamate. Positions 313, 326, and 328 each coordinate Mg(2+). Lys344 is an L-glutamate binding site. The tract at residues Gly391–Lys423 is disordered.

This sequence belongs to the tubulin polyglutamylase family. Part of the neuronal tubulin polyglutamylase complex which contains TPGS1, TPGS2, TTLL1, LRRC49 and NICN1. Interacts with PCM1, CSTPP1 and LRRC49. Mg(2+) is required as a cofactor.

It is found in the cytoplasm. The protein resides in the cytoskeleton. Its subcellular location is the cilium basal body. It localises to the cilium axoneme. The protein localises to the cell projection. It is found in the cilium. The protein resides in the flagellum. It carries out the reaction (L-glutamyl)(n)-gamma-L-glutamyl-L-glutamyl-[protein] + L-glutamate + ATP = (L-glutamyl)(n+1)-gamma-L-glutamyl-L-glutamyl-[protein] + ADP + phosphate + H(+). Catalytic subunit of a polyglutamylase complex which modifies tubulin, generating side chains of glutamate on the gamma-carboxyl group of specific glutamate residues within the C-terminal tail of tubulin. Probably involved in the side-chain elongation step of the polyglutamylation reaction rather than the initiation step. Modifies both alpha- and beta-tubulins with a preference for the alpha-tail. Unlike most polyglutamylases of the tubulin--tyrosine ligase family, only displays a catalytic activity when in complex with other proteins as it is most likely lacking domains important for autonomous activity. Part of the neuronal tubulin polyglutamylase complex. Mediates cilia and flagella polyglutamylation which is essential for their biogenesis and motility. Involved in respiratory motile cilia function through the regulation of beating asymmetry. Essential for sperm flagella biogenesis, motility and male fertility. Involved in KLF4 glutamylation which impedes its ubiquitination, thereby leading to somatic cell reprogramming, pluripotency maintenance and embryogenesis. This Bos taurus (Bovine) protein is Polyglutamylase complex subunit TTLL1 (TTLL1).